The following is a 617-amino-acid chain: Estrogen receptor (617 aa).

Positions 1-54 (MSEEQARAEAPAGARQRRRSELEGYSVSLASLKLSPMYPEEEQRTTGGISSTAH) are disordered. The segment at 1 to 186 (MSEEQARAEA…AIGLVKEIRY (186 aa)) is modulating. NR C4-type zinc fingers lie at residues 187-207 (CSVC…CEGC) and 223-247 (CPAT…LRKC). Residues 187–252 (CSVCSDYASG…RLRKCYEVGM (66 aa)) constitute a DNA-binding region (nuclear receptor). The interval 253–315 (MKGGFRKERG…GGGVADVVCM (63 aa)) is hinge. The disordered stretch occupies residues 269 to 303 (NRRPSGLKERERGYSKAQSGSDVREALPQDGQSSS). One can recognise an NR LBD domain in the interval 316 to 552 (SPEQVLLLLL…DLLLEMLDAH (237 aa)). A disordered region spans residues 568–617 (VSSSPTTTATTPTTNTTTTTTTTTHHPSNGSTCPADLPSNPPGPGQSPSP). Low complexity predominate over residues 573 to 591 (TTTATTPTTNTTTTTTTTT). The span at 606 to 617 (SNPPGPGQSPSP) shows a compositional bias: pro residues.

It belongs to the nuclear hormone receptor family. NR3 subfamily. As to quaternary structure, binds DNA as a homodimer. Can form a heterodimer with ER-beta. As to expression, ovary and testis.

It is found in the nucleus. The steroid hormones and their receptors are involved in the regulation of eukaryotic gene expression and affect cellular proliferation and differentiation in target tissues. This Ictalurus punctatus (Channel catfish) protein is Estrogen receptor (esr1).